A 983-amino-acid chain; its full sequence is UPF0182 protein CMM_1204 (983 aa).

The next 7 helical transmembrane spans lie at 16–36 (LAIT…FAGF), 56–76 (WGAG…PVFV), 108–128 (LAMF…ASSG), 161–181 (FYHA…LGVL), 205–225 (IQIA…IWLD), 255–275 (AILA…AVIG), and 281–301 (IIGT…YPAI). Residues 699 to 714 (QDLWTTPNDPTATTEA) are compositionally biased toward polar residues. Disordered stretches follow at residues 699 to 718 (QDLW…GTPA) and 884 to 936 (DSGA…AQDV). Positions 902–918 (GGTGDGATDGATDGGTG) are enriched in gly residues. Low complexity predominate over residues 919–933 (STPTPAPTTSPSAPA).

This sequence belongs to the UPF0182 family.

It is found in the cell membrane. This chain is UPF0182 protein CMM_1204, found in Clavibacter michiganensis subsp. michiganensis (strain NCPPB 382).